The sequence spans 172 residues: Small ribosomal subunit protein uS5 (172 aa).

The region spanning 17–80 (LREKMISVNR…EQARRNMFKV (64 aa)) is the S5 DRBM domain.

The protein belongs to the universal ribosomal protein uS5 family. Part of the 30S ribosomal subunit. Contacts proteins S4 and S8.

In terms of biological role, with S4 and S12 plays an important role in translational accuracy. Located at the back of the 30S subunit body where it stabilizes the conformation of the head with respect to the body. This Burkholderia pseudomallei (strain 1106a) protein is Small ribosomal subunit protein uS5.